The chain runs to 291 residues: Pyridoxal 5'-phosphate synthase subunit PdxS (291 aa).

Asp-23 lines the D-ribose 5-phosphate pocket. The active-site Schiff-base intermediate with D-ribose 5-phosphate is Lys-80. Gly-152 contacts D-ribose 5-phosphate. Arg-164 lines the D-glyceraldehyde 3-phosphate pocket. D-ribose 5-phosphate-binding positions include Gly-213 and 234–235; that span reads GS.

It belongs to the PdxS/SNZ family. As to quaternary structure, in the presence of PdxT, forms a dodecamer of heterodimers.

The catalysed reaction is aldehydo-D-ribose 5-phosphate + D-glyceraldehyde 3-phosphate + L-glutamine = pyridoxal 5'-phosphate + L-glutamate + phosphate + 3 H2O + H(+). It participates in cofactor biosynthesis; pyridoxal 5'-phosphate biosynthesis. Catalyzes the formation of pyridoxal 5'-phosphate from ribose 5-phosphate (RBP), glyceraldehyde 3-phosphate (G3P) and ammonia. The ammonia is provided by the PdxT subunit. Can also use ribulose 5-phosphate and dihydroxyacetone phosphate as substrates, resulting from enzyme-catalyzed isomerization of RBP and G3P, respectively. This is Pyridoxal 5'-phosphate synthase subunit PdxS from Methanocorpusculum labreanum (strain ATCC 43576 / DSM 4855 / Z).